The chain runs to 308 residues: KH domain-containing protein At4g26480 (308 aa).

Positions 1 to 26 (MMMMTSLGGGAGGGGGGGGSGGGRFV) are disordered. Residues 7 to 24 (LGGGAGGGGGGGGSGGGR) are compositionally biased toward gly residues. A KH domain is found at 165–232 (DIPVDKYPNY…EHLNEPLHIL (68 aa)). The segment at 284-308 (EEGSPMSGSISPYNSLGMKRAKTRG) is disordered. Ser294 is modified (phosphoserine).

The protein localises to the nucleus. This Arabidopsis thaliana (Mouse-ear cress) protein is KH domain-containing protein At4g26480.